The sequence spans 319 residues: Malate dehydrogenase (319 aa).

Residues 10–15 (GAGNIG) and Asp-34 each bind NAD(+). Residues Arg-83 and Arg-89 each coordinate substrate. NAD(+)-binding positions include Asn-96 and 119–121 (ITN). Positions 121 and 152 each coordinate substrate. Residue His-176 is the Proton acceptor of the active site.

This sequence belongs to the LDH/MDH superfamily. MDH type 3 family.

The enzyme catalyses (S)-malate + NAD(+) = oxaloacetate + NADH + H(+). Functionally, catalyzes the reversible oxidation of malate to oxaloacetate. This Francisella tularensis subsp. mediasiatica (strain FSC147) protein is Malate dehydrogenase.